The primary structure comprises 191 residues: Putative glutathione-dependent formaldehyde-activating enzyme (191 aa).

The CENP-V/GFA domain occupies 20-166 (FSGGTLRCHC…FKSVGLETYD (147 aa)). Cysteine 27, cysteine 29, cysteine 48, cysteine 50, cysteine 53, cysteine 95, and cysteine 98 together coordinate Zn(2+).

Belongs to the Gfa family. Zn(2+) serves as cofactor.

The catalysed reaction is S-(hydroxymethyl)glutathione = glutathione + formaldehyde. It participates in one-carbon metabolism; formaldehyde degradation; formate from formaldehyde (glutathione route): step 1/3. In terms of biological role, catalyzes the condensation of formaldehyde and glutathione to S-hydroxymethylglutathione. This is Putative glutathione-dependent formaldehyde-activating enzyme from Colletotrichum graminicola (strain M1.001 / M2 / FGSC 10212) (Maize anthracnose fungus).